A 236-amino-acid polypeptide reads, in one-letter code: Terpene cyclase andB (236 aa).

A run of 7 helical transmembrane segments spans residues 13-33, 45-65, 70-90, 106-126, 135-155, 166-186, and 200-220; these read TVVN…YILM, MSML…ILCP, VVRP…YAAI, HLPL…IALI, FLWS…FQLL, VLWL…TLMW, and LTAY…VVFY.

Belongs to the paxB family.

Its subcellular location is the membrane. Its pathway is secondary metabolite biosynthesis; terpenoid biosynthesis. Terpene cyclase; part of the gene cluster that mediates the biosynthesis of anditomin, a fungal meroterpenoid. The first step of the pathway is the synthesis of 3,5-dimethylorsellinic acid (DMOA) by the polyketide synthase andM. DMOA is then converted to the phthalide compound 5,7-dihydroxy-4,6-dimethylphthalide (DHDMP) by the cytochrome P450 monooxygenase andK, which is further prenylated by the prenyltransferase andD to yield farnesyl-DHDMP. Further epoxidation by the FAD-dependent monooxygenase andE leads to epoxyfarnesyl-DHDMP. The next step involves the terpene cyclase andB that converts epoxyfarnesyl-DHDMP into preandiloid A through opening of the epoxide ring followed by the cyclization of the farnesyl moiety. Preandiloid A is in turn oxidized at the C-3 hydroxyl group to yield preandiloid B by the dehydrogenase andC. The dioxygenase andA is solely responsible for the dehydrogenation of preandiloid B leading to the enone preandiloid C, as well as for the intriguing structural rearrangement to generate the bicyclo[2.2.2]octane core, transforming preandiloid C into andiconin. FAD-binding monooxygenase andJ then produces andilesin D which is reduced by dehydrogenase andI to yield andilesin A. Action of acetyltransferase andG followed by a spontaneous acetate elimination leads then to andilesin B, which is in turn substrate of the short chain dehydrogenase andH to yield andilesin C. Finally, the dioxygenase andF catalyzes the transformation of andilesin C to anditomin. This Emericella variicolor (Aspergillus stellatus) protein is Terpene cyclase andB.